The primary structure comprises 116 residues: DNA polymerase epsilon subunit 4 (116 aa).

The span at 1–10 (MAAAAPGSGA) shows a compositional bias: low complexity. Positions 1–36 (MAAAAPGSGAAREEEGTGGDAATPQPPAPTSAPGAR) are disordered.

As to quaternary structure, component of the DNA polymerase epsilon complex consisting of four subunits: the catalytic subunit POLE and the accessory subunits POLE2, POLE3 and POLE4. Interaction with POLE3 is a prerequisite for further binding with POLE and POLE2.

It localises to the nucleus. In terms of biological role, accessory component of the DNA polymerase epsilon complex. Participates in DNA repair and in chromosomal DNA replication. The sequence is that of DNA polymerase epsilon subunit 4 (POLE4) from Bos taurus (Bovine).